A 61-amino-acid chain; its full sequence is UPF0391 membrane protein Pnap_0032 (61 aa).

2 consecutive transmembrane segments (helical) span residues 5–25 and 33–53; these read AIIFAVISLIAGALGFSGVAA and VLFGLFLILAVIFIVLAALGV.

Belongs to the UPF0391 family.

The protein localises to the cell membrane. The sequence is that of UPF0391 membrane protein Pnap_0032 from Polaromonas naphthalenivorans (strain CJ2).